An 88-amino-acid polypeptide reads, in one-letter code: MKKILIGGIRLYQKYISRFTPATCRFYPTCSAYGIEAIQTHGALKGSYLAIRRISKCHPFHKGGLDFVPPKKDKNADSEHSCKAHHHH.

The segment at 66–88 (DFVPPKKDKNADSEHSCKAHHHH) is disordered. Positions 69–82 (PPKKDKNADSEHSC) are enriched in basic and acidic residues.

It belongs to the UPF0161 family.

Its subcellular location is the cell membrane. Could be involved in insertion of integral membrane proteins into the membrane. The protein is Putative membrane protein insertion efficiency factor of Listeria monocytogenes serotype 4a (strain HCC23).